Reading from the N-terminus, the 375-residue chain is Esterase AN6793 (375 aa).

Residues 138-158 (RHPQPGLDPGHGHRHKRMPPL) are disordered.

Belongs to the sidJ hydrolase family. In terms of assembly, homodimer.

It participates in secondary metabolite biosynthesis. In terms of biological role, esterase; part of a cluster that mediates the biosynthesis of a yet undetermined secondary metabolite. With the HR-PKS AN6791, produces a pathway intermediate compound with molecular weight 258. This chain is Esterase AN6793, found in Emericella nidulans (strain FGSC A4 / ATCC 38163 / CBS 112.46 / NRRL 194 / M139) (Aspergillus nidulans).